Reading from the N-terminus, the 250-residue chain is Mediator of RNA polymerase II transcription subunit 8 (250 aa).

Positions 217–250 are disordered; sequence SPMSAVSPGAGPLGKMPSGIKTNIKSANQVHPYR. A compositionally biased stretch (polar residues) spans 236–250; the sequence is IKTNIKSANQVHPYR.

It belongs to the Mediator complex subunit 8 family. As to quaternary structure, component of the Mediator complex.

Its subcellular location is the nucleus. In terms of biological role, component of the Mediator complex, a coactivator involved in the regulated transcription of nearly all RNA polymerase II-dependent genes. Mediator functions as a bridge to convey information from gene-specific regulatory proteins to the basal RNA polymerase II transcription machinery. Mediator is recruited to promoters by direct interactions with regulatory proteins and serves as a scaffold for the assembly of a functional preinitiation complex with RNA polymerase II and the general transcription factors. This chain is Mediator of RNA polymerase II transcription subunit 8 (MED8), found in Aedes aegypti (Yellowfever mosquito).